The sequence spans 92 residues: Probable Fe(2+)-trafficking protein (92 aa).

It belongs to the Fe(2+)-trafficking protein family.

Could be a mediator in iron transactions between iron acquisition and iron-requiring processes, such as synthesis and/or repair of Fe-S clusters in biosynthetic enzymes. This is Probable Fe(2+)-trafficking protein from Shewanella oneidensis (strain ATCC 700550 / JCM 31522 / CIP 106686 / LMG 19005 / NCIMB 14063 / MR-1).